The primary structure comprises 296 residues: Uridine phosphorylase A (296 aa).

Phosphate-binding positions include Gly46, Arg77, and 121-124 (RLGT). Uridine is bound by residues 125–126 (SG) and 201–203 (QGR).

The protein belongs to the PNP/UDP phosphorylase family. In terms of assembly, homodimer.

The enzyme catalyses uridine + phosphate = alpha-D-ribose 1-phosphate + uracil. The protein operates within pyrimidine metabolism; UMP biosynthesis via salvage pathway; uracil from uridine (phosphorylase route): step 1/1. In terms of biological role, catalyzes the reversible phosphorylytic cleavage of uridine and deoxyuridine to uracil and ribose- or deoxyribose-1-phosphate. The produced molecules are then utilized as carbon and energy sources or in the rescue of pyrimidine bases for nucleotide synthesis. This is Uridine phosphorylase A from Schistosoma mansoni (Blood fluke).